Here is a 178-residue protein sequence, read N- to C-terminus: ATP synthase subunit delta (178 aa).

This sequence belongs to the ATPase delta chain family. In terms of assembly, F-type ATPases have 2 components, F(1) - the catalytic core - and F(0) - the membrane proton channel. F(1) has five subunits: alpha(3), beta(3), gamma(1), delta(1), epsilon(1). F(0) has three main subunits: a(1), b(2) and c(10-14). The alpha and beta chains form an alternating ring which encloses part of the gamma chain. F(1) is attached to F(0) by a central stalk formed by the gamma and epsilon chains, while a peripheral stalk is formed by the delta and b chains.

Its subcellular location is the cell inner membrane. F(1)F(0) ATP synthase produces ATP from ADP in the presence of a proton or sodium gradient. F-type ATPases consist of two structural domains, F(1) containing the extramembraneous catalytic core and F(0) containing the membrane proton channel, linked together by a central stalk and a peripheral stalk. During catalysis, ATP synthesis in the catalytic domain of F(1) is coupled via a rotary mechanism of the central stalk subunits to proton translocation. Functionally, this protein is part of the stalk that links CF(0) to CF(1). It either transmits conformational changes from CF(0) to CF(1) or is implicated in proton conduction. The polypeptide is ATP synthase subunit delta (Pseudomonas fluorescens (strain ATCC BAA-477 / NRRL B-23932 / Pf-5)).